We begin with the raw amino-acid sequence, 143 residues long: Peptide methionine sulfoxide reductase MsrB (143 aa).

Positions 5–127 constitute a MsrB domain; it reads KEKRLKELNR…NSAALKFIPK (123 aa). The Nucleophile role is filled by C116.

The protein belongs to the MsrB Met sulfoxide reductase family.

It catalyses the reaction L-methionyl-[protein] + [thioredoxin]-disulfide + H2O = L-methionyl-(R)-S-oxide-[protein] + [thioredoxin]-dithiol. The chain is Peptide methionine sulfoxide reductase MsrB from Bacillus pumilus (strain SAFR-032).